Here is a 119-residue protein sequence, read N- to C-terminus: Large ribosomal subunit protein bL20 (119 aa).

It belongs to the bacterial ribosomal protein bL20 family.

Functionally, binds directly to 23S ribosomal RNA and is necessary for the in vitro assembly process of the 50S ribosomal subunit. It is not involved in the protein synthesizing functions of that subunit. In Treponema denticola (strain ATCC 35405 / DSM 14222 / CIP 103919 / JCM 8153 / KCTC 15104), this protein is Large ribosomal subunit protein bL20.